A 447-amino-acid polypeptide reads, in one-letter code: MNKNTWVIGFTLFAMFFGAGNLIFPPNLGLDSGQFFWPAILAFVLTGIDLPLLGVIVGALDKEGYIGALNKISPKFSILFLIIIYLTIGPLFAIPRTASTSFEMTITPIIHSNSSIALFIFTIIYFIVVLYICLNPSKLIDRIGSLLTPLLLITILAMIIKGYLDFSGNTAGKGNEALYHSNFSSFAEGFTQGYLTMDAIAAIAFSMIVVNAVKLTGITKTNQIFKQTLTAGLIAAVALIFIYISLGYIGNHMPVSDMTLDQLKSKDRNIGTYLLTTMASTGFGSFGKYLLGIIVALACLTTACGLIGAVSEYFHRIVPKVSYKAFVLVFILMSFIIANQGLNAVISMSIPVLSIVYPVAITVVLLILIAKFIPTKRISQQIPVIIVFILSIFSVISKLGWLKINFIESLPLRAYSLEWFPVAIIATILGYLVGIFVKQDPIKYQQE.

The next 12 helical transmembrane spans lie at 6–26 (WVIG…IFPP), 40–60 (ILAF…VGAL), 74–94 (PKFS…LFAI), 114–134 (SSIA…YICL), 143–163 (IGSL…IKGY), 193–213 (GYLT…VNAV), 229–249 (LTAG…LGYI), 290–310 (LLGI…IGAV), 326–346 (FVLV…NAVI), 350–370 (IPVL…ILIA), 382–402 (IPVI…LGWL), and 417–437 (LEWF…GIFV).

This sequence belongs to the branched chain amino acid transporter family.

Its subcellular location is the cell membrane. Functionally, component of the transport system for branched-chain amino acids (leucine, isoleucine and valine), which is coupled to a proton motive force (Potential). Contributes to NaCl tolerance. This Staphylococcus aureus (strain bovine RF122 / ET3-1) protein is Putative branched-chain amino acid carrier protein SAB1263c.